A 488-amino-acid polypeptide reads, in one-letter code: Type II restriction enzyme HgaI (488 aa).

The catalysed reaction is Endonucleolytic cleavage of DNA to give specific double-stranded fragments with terminal 5'-phosphates.. Functionally, an S subtype restriction enzyme that recognizes the double-stranded sequences 5'-GACGC-3' and 5'-GCGTC-3' and cleaves respectively 10 bases after G-1 and 10 bases before G'-1. This is Type II restriction enzyme HgaI (hgaIR) from Avibacterium volantium (Pasteurella volantium).